The primary structure comprises 141 residues: MASEQTLSIIKPDAVQNNYIGEIISRFEQAGLKIAAIKMTTLTKDQASKFYAIHKDRPFYNDLVNFMSSGPVVVMVLEGNQAIAKNRELMGATDPKKAEKGTLRADFAESMSRNAVHGSDSSETAEEEVLFFFKPDEITHR.

ATP-binding residues include lysine 11, phenylalanine 59, arginine 87, threonine 93, arginine 104, and asparagine 114. The Pros-phosphohistidine intermediate role is filled by histidine 117.

It belongs to the NDK family. As to quaternary structure, homotetramer. It depends on Mg(2+) as a cofactor.

The protein resides in the cytoplasm. It carries out the reaction a 2'-deoxyribonucleoside 5'-diphosphate + ATP = a 2'-deoxyribonucleoside 5'-triphosphate + ADP. The enzyme catalyses a ribonucleoside 5'-diphosphate + ATP = a ribonucleoside 5'-triphosphate + ADP. In terms of biological role, major role in the synthesis of nucleoside triphosphates other than ATP. The ATP gamma phosphate is transferred to the NDP beta phosphate via a ping-pong mechanism, using a phosphorylated active-site intermediate. The sequence is that of Nucleoside diphosphate kinase 1 from Protochlamydia amoebophila (strain UWE25).